The chain runs to 231 residues: Orotidine 5'-phosphate decarboxylase (231 aa).

Residues Asp-11, Lys-34, Asp-61 to Thr-70, Thr-117, Arg-179, Gln-188, Gly-208, and Arg-209 each bind substrate. Catalysis depends on Lys-63, which acts as the Proton donor.

This sequence belongs to the OMP decarboxylase family. Type 1 subfamily. In terms of assembly, homodimer.

The catalysed reaction is orotidine 5'-phosphate + H(+) = UMP + CO2. The protein operates within pyrimidine metabolism; UMP biosynthesis via de novo pathway; UMP from orotate: step 2/2. Functionally, catalyzes the decarboxylation of orotidine 5'-monophosphate (OMP) to uridine 5'-monophosphate (UMP). This chain is Orotidine 5'-phosphate decarboxylase, found in Streptococcus thermophilus (strain ATCC BAA-491 / LMD-9).